Consider the following 387-residue polypeptide: 4-hydroxy-3-methylbut-2-en-1-yl diphosphate synthase (flavodoxin) (387 aa).

[4Fe-4S] cluster contacts are provided by Cys-280, Cys-283, Cys-315, and Glu-322.

It belongs to the IspG family. Requires [4Fe-4S] cluster as cofactor.

The enzyme catalyses (2E)-4-hydroxy-3-methylbut-2-enyl diphosphate + oxidized [flavodoxin] + H2O + 2 H(+) = 2-C-methyl-D-erythritol 2,4-cyclic diphosphate + reduced [flavodoxin]. The protein operates within isoprenoid biosynthesis; isopentenyl diphosphate biosynthesis via DXP pathway; isopentenyl diphosphate from 1-deoxy-D-xylulose 5-phosphate: step 5/6. In terms of biological role, converts 2C-methyl-D-erythritol 2,4-cyclodiphosphate (ME-2,4cPP) into 1-hydroxy-2-methyl-2-(E)-butenyl 4-diphosphate. This chain is 4-hydroxy-3-methylbut-2-en-1-yl diphosphate synthase (flavodoxin), found in Mycobacterium bovis (strain BCG / Pasteur 1173P2).